The primary structure comprises 597 residues: 66 kDa protein (597 aa).

Disordered stretches follow at residues 62–82 (VRLQ…PSLQ), 160–198 (HSVP…FRQH), 218–315 (NQLA…SCRV), 329–411 (HFKS…LHHD), and 535–586 (SSPQ…ASAL). Polar residues predominate over residues 64–80 (LQSSPPRGPQSDRNLPS). A compositionally biased stretch (polar residues) spans 218–234 (NQLAQAQQHPLPSSKPL). The segment covering 273-291 (PSSRGHLPSSTSSSSPRSN) has biased composition (low complexity). The span at 305–315 (SNSQDLRSCRV) shows a compositional bias: polar residues. Residues 389-400 (QTHHARLPHSKR) are compositionally biased toward basic residues. Positions 535–574 (SSPQSHSSESLRGDSPPSSHLPSSPSSACSGDSFASCSSF) are enriched in low complexity. Positions 575-584 (GPSNPTSSAS) are enriched in polar residues.

Belongs to the tymoviridae protein p69 family.

The sequence is that of 66 kDa protein from Ononis.